We begin with the raw amino-acid sequence, 97 residues long: Co-chaperonin GroES (97 aa).

Belongs to the GroES chaperonin family. As to quaternary structure, heptamer of 7 subunits arranged in a ring. Interacts with the chaperonin GroEL.

Its subcellular location is the cytoplasm. Together with the chaperonin GroEL, plays an essential role in assisting protein folding. The GroEL-GroES system forms a nano-cage that allows encapsulation of the non-native substrate proteins and provides a physical environment optimized to promote and accelerate protein folding. GroES binds to the apical surface of the GroEL ring, thereby capping the opening of the GroEL channel. This chain is Co-chaperonin GroES, found in Klebsiella aerogenes (Enterobacter aerogenes).